Consider the following 166-residue polypeptide: Lutropin subunit beta (166 aa).

A signal peptide spans 1–21; the sequence is MGGAQVLLLLTLLGTPLVTHG. 6 disulfide bridges follow: C56/C104, C70/C119, C73/C157, C81/C135, C85/C137, and C140/C147. N60 carries an N-linked (GlcNAc...) asparagine glycan.

Belongs to the glycoprotein hormones subunit beta family. Heterodimer of a common alpha chain and a unique beta chain which confers biological specificity to thyrotropin, lutropin, follitropin and gonadotropin.

It is found in the secreted. Functionally, promotes spermatogenesis and ovulation by stimulating the testes and ovaries to synthesize steroids. This chain is Lutropin subunit beta (LHB), found in Coturnix japonica (Japanese quail).